The chain runs to 373 residues: 3-isopropylmalate dehydrogenase (373 aa).

Residue 82–93 participates in NAD(+) binding; the sequence is GPKWGTGTVRPE. Residues Arg100, Arg110, Arg139, and Asp231 each coordinate substrate. 3 residues coordinate Mg(2+): Asp231, Asp256, and Asp260. 295–306 provides a ligand contact to NAD(+); that stretch reads GSAPDLPANKVN.

This sequence belongs to the isocitrate and isopropylmalate dehydrogenases family. Homodimer. It depends on Mg(2+) as a cofactor. Requires Mn(2+) as cofactor.

The protein localises to the cytoplasm. It catalyses the reaction (2R,3S)-3-isopropylmalate + NAD(+) = 4-methyl-2-oxopentanoate + CO2 + NADH. It participates in amino-acid biosynthesis; L-leucine biosynthesis; L-leucine from 3-methyl-2-oxobutanoate: step 3/4. In terms of biological role, catalyzes the oxidation of 3-carboxy-2-hydroxy-4-methylpentanoate (3-isopropylmalate) to 3-carboxy-4-methyl-2-oxopentanoate. The product decarboxylates to 4-methyl-2 oxopentanoate. The protein is 3-isopropylmalate dehydrogenase (LEU2) of Candida albicans (Yeast).